The primary structure comprises 197 residues: Xanthine phosphoribosyltransferase (197 aa).

Xanthine is bound by residues L20 and T27. 128–132 (ANGQA) contributes to the 5-phospho-alpha-D-ribose 1-diphosphate binding site. A xanthine-binding site is contributed by K156.

Belongs to the purine/pyrimidine phosphoribosyltransferase family. Xpt subfamily. Homodimer.

The protein localises to the cytoplasm. The enzyme catalyses XMP + diphosphate = xanthine + 5-phospho-alpha-D-ribose 1-diphosphate. It participates in purine metabolism; XMP biosynthesis via salvage pathway; XMP from xanthine: step 1/1. Its function is as follows. Converts the preformed base xanthine, a product of nucleic acid breakdown, to xanthosine 5'-monophosphate (XMP), so it can be reused for RNA or DNA synthesis. In Lactococcus lactis subsp. cremoris (strain MG1363), this protein is Xanthine phosphoribosyltransferase.